Here is a 348-residue protein sequence, read N- to C-terminus: Probable dual-specificity RNA methyltransferase RlmN (348 aa).

The active-site Proton acceptor is the E93. The 235-residue stretch at 99–333 folds into the Radical SAM core domain; that stretch reads TEKRLTACLS…VSLRKSRGLD (235 aa). The cysteines at positions 106 and 338 are disulfide-linked. [4Fe-4S] cluster-binding residues include C113, C117, and C120. Residues 160-161, S190, 219-221, and N295 each bind S-adenosyl-L-methionine; these read GE and SLH. The active-site S-methylcysteine intermediate is C338.

It belongs to the radical SAM superfamily. RlmN family. [4Fe-4S] cluster is required as a cofactor.

It localises to the cytoplasm. The catalysed reaction is adenosine(2503) in 23S rRNA + 2 reduced [2Fe-2S]-[ferredoxin] + 2 S-adenosyl-L-methionine = 2-methyladenosine(2503) in 23S rRNA + 5'-deoxyadenosine + L-methionine + 2 oxidized [2Fe-2S]-[ferredoxin] + S-adenosyl-L-homocysteine. It catalyses the reaction adenosine(37) in tRNA + 2 reduced [2Fe-2S]-[ferredoxin] + 2 S-adenosyl-L-methionine = 2-methyladenosine(37) in tRNA + 5'-deoxyadenosine + L-methionine + 2 oxidized [2Fe-2S]-[ferredoxin] + S-adenosyl-L-homocysteine. Specifically methylates position 2 of adenine 2503 in 23S rRNA and position 2 of adenine 37 in tRNAs. The protein is Probable dual-specificity RNA methyltransferase RlmN of Prochlorococcus marinus (strain AS9601).